A 758-amino-acid polypeptide reads, in one-letter code: 5-methyltetrahydropteroyltriglutamate--homocysteine methyltransferase (758 aa).

Residues 16–19 (RELK) and K116 each bind 5-methyltetrahydropteroyltri-L-glutamate. L-homocysteine is bound by residues 436 to 438 (IGS) and E489. L-methionine is bound by residues 436–438 (IGS) and E489. 5-methyltetrahydropteroyltri-L-glutamate is bound by residues 520 to 521 (RC) and W566. Residue D604 coordinates L-homocysteine. L-methionine is bound at residue D604. E610 lines the 5-methyltetrahydropteroyltri-L-glutamate pocket. H646, C648, and E670 together coordinate Zn(2+). The active-site Proton donor is the H699. Residue C731 participates in Zn(2+) binding.

This sequence belongs to the vitamin-B12 independent methionine synthase family. It depends on Zn(2+) as a cofactor.

The catalysed reaction is 5-methyltetrahydropteroyltri-L-glutamate + L-homocysteine = tetrahydropteroyltri-L-glutamate + L-methionine. It functions in the pathway amino-acid biosynthesis; L-methionine biosynthesis via de novo pathway; L-methionine from L-homocysteine (MetE route): step 1/1. Its function is as follows. Catalyzes the transfer of a methyl group from 5-methyltetrahydrofolate to homocysteine resulting in methionine formation. The protein is 5-methyltetrahydropteroyltriglutamate--homocysteine methyltransferase of Nitrosococcus oceani (strain ATCC 19707 / BCRC 17464 / JCM 30415 / NCIMB 11848 / C-107).